The following is a 764-amino-acid chain: Polyribonucleotide nucleotidyltransferase (764 aa).

The Mg(2+) site is built by Asp555 and Asp561. Residues 621 to 680 form the KH domain; the sequence is PHITSINIPQNKIGEVIGPKGKTINQITEETGANITIEDDGTVFISAVGGESAREAEEKI. The 70-residue stretch at 692–761 folds into the S1 motif domain; it reads GDRFLGTVVK…NRGKISLVLV (70 aa).

This sequence belongs to the polyribonucleotide nucleotidyltransferase family. The cofactor is Mg(2+).

Its subcellular location is the cytoplasm. It carries out the reaction RNA(n+1) + phosphate = RNA(n) + a ribonucleoside 5'-diphosphate. Functionally, involved in mRNA degradation. Catalyzes the phosphorolysis of single-stranded polyribonucleotides processively in the 3'- to 5'-direction. This is Polyribonucleotide nucleotidyltransferase from Corynebacterium jeikeium (strain K411).